The primary structure comprises 85 residues: MAHKKGQGSSRNGRDSPGQRRGIKVYGSEKVVAGNILVRQVGTLVHPGQNVGMGKDFTLFALIDGTVKYSRTRGDRRVVSVLPGA.

The interval 1–22 (MAHKKGQGSSRNGRDSPGQRRG) is disordered.

The protein belongs to the bacterial ribosomal protein bL27 family.

The protein is Large ribosomal subunit protein bL27 of Anaeromyxobacter dehalogenans (strain 2CP-1 / ATCC BAA-258).